The chain runs to 473 residues: Allene oxide synthase CYP74A2 (473 aa).

Residues K88, H119, and K123 each contribute to the heme b site. The (13S)-hydroperoxy-(9Z,11E)-octadecadienoate site is built by S199 and K282. K424 and C426 together coordinate heme b.

It belongs to the cytochrome P450 family. The cofactor is heme b.

It carries out the reaction (13S)-hydroperoxy-(9Z,11E,15Z)-octadecatrienoate = (9Z,13S,15Z)-12,13-epoxyoctadeca-9,11,15-trienoate + H2O. The catalysed reaction is (13S)-hydroperoxy-(9Z,11E)-octadecadienoate = (9Z,13S)-12,13-epoxyoctadeca-9,11-dienoate + H2O. Its pathway is lipid metabolism; oxylipin biosynthesis. Functionally, cytochrome P450 enzyme involved in the biosynthesis of oxylipin jasmonates, important phytohormones acting as growth regulators and signaling molecules for plant defense. Functions as an allene oxide synthase that converts hydroperoxy fatty acids to unstable allene epoxides. Catalyzes the dehydration of 13-HPOTE ((13S)-hydroperoxy-(9Z,11E,15Z)-octadecatrienoate). Also catalyzes the dehydration of 13-HPODE ((13S)-hydroperoxy-(9Z,11E)-octadecadienoate). In Parthenium argentatum (Guayule rubber plant), this protein is Allene oxide synthase CYP74A2.